We begin with the raw amino-acid sequence, 169 residues long: Probable glutathione peroxidase 2 (169 aa).

The active site involves cysteine 41.

Belongs to the glutathione peroxidase family. In terms of assembly, interacts with DJ1A. As to expression, expressed in leaves, stems, flowers, green siliques and roots.

It localises to the cytoplasm. It is found in the cytosol. Its subcellular location is the nucleus. It carries out the reaction 2 glutathione + H2O2 = glutathione disulfide + 2 H2O. In terms of biological role, may constitute a glutathione peroxidase-like protective system against oxidative stresses. The protein is Probable glutathione peroxidase 2 (GPX2) of Arabidopsis thaliana (Mouse-ear cress).